A 460-amino-acid chain; its full sequence is Biphenyl 2,3-dioxygenase subunit alpha (460 aa).

In terms of domain architecture, Rieske spans W56–A165. Positions 98, 100, 118, and 121 each coordinate [2Fe-2S] cluster. Q217–H230 contacts substrate. Fe cation is bound by residues H224, H230, and D378.

This sequence belongs to the bacterial ring-hydroxylating dioxygenase alpha subunit family. Heterohexamer consisting of three BphA1 subunits and three BphA2 subunits. The multicomponent biphenyl dioxygenase system is composed of a ferredoxin reductase (BphA4), a ferredoxin (BphA3), and a terminal oxygenase (BphA1A2). Requires [2Fe-2S] cluster as cofactor. It depends on Fe cation as a cofactor.

The catalysed reaction is biphenyl + NADH + O2 + H(+) = (2R,3S)-3-phenylcyclohexa-3,5-diene-1,2-diol + NAD(+). Its pathway is xenobiotic degradation; biphenyl degradation; 2-hydroxy-2,4-pentadienoate and benzoate from biphenyl: step 1/4. Functionally, part of the oxygenase component of the biphenyl dioxygenase system that catalyzes the stereospecific dihydroxylation of the aromatic ring of biphenyl, yielding a dihydrodiol compound. Is essential for biphenyl degradation and growth of Rhodococcus sp. strain RHA1 on biphenyl as the sole source of carbon and energy. Can also use naphtalene and 4-chlorobiphenyl (4-CB) as substrates, as well as some polychlorinated biphenyls (PCB) such as 2,2'-dichlorobiphenyl, 2,3-dichlorobiphenyl and 2,5,2'-trichlorobiphenyl. Exhibits weak activity toward dibenzofuran and dibenzo-p-dioxin. Electrons are transferred from NADH to the [2Fe-2S] cluster in BphA1 via FAD of BphA4 and [2Fe-2S] cluster of BphA3. The chain is Biphenyl 2,3-dioxygenase subunit alpha from Rhodococcus jostii (strain RHA1).